The sequence spans 305 residues: Spore coat protein CotA (305 aa).

It localises to the spore coat. Its subcellular location is the spore. It is found in the perispore. In terms of biological role, contributes to maintain proper thickness of the spore coat. May contribute to the formation of polar appendages. May play an important role in assembly of the outer layers of the spore coat. In Clostridioides difficile (strain 630) (Peptoclostridium difficile), this protein is Spore coat protein CotA.